The following is a 286-amino-acid chain: MAGIYAVSIKGHASAIFNRQEKEISTGRVWEVMKKIMSLKPTRVIMSYSLLRSALDKSRQLTQEEYNIMQLILDGCVKTLEPVAASGICIDVNLGKCTKHTIPFGITNNDVGHVSVVMTLPFLEEGCYNIGACFDGRLSKSRSDASHYAVDVSLEIYLKSLSRDEAEEQISKGTSVYPFKINHPTYFEDETDTSDGESLSGRASSDDGPEDGGHGHGDKNNEKNSGKVVRKRKSRKEIDVGRFKMVKDNIINTRSGLLKSMRGTGHRKHRTQEITEGYNYGDKDAE.

Disordered regions lie at residues 187-234 (FEDE…KRKS) and 257-286 (LLKSMRGTGHRKHRTQEITEGYNYGDKDAE). Basic and acidic residues predominate over residues 211–225 (DGGHGHGDKNNEKNS).

This protein is probably a component of the active polymerase. It may function in template binding. In Aphis (Hairy beggarticks), this protein is Phosphoprotein (P).